An 84-amino-acid polypeptide reads, in one-letter code: U4-theraphotoxin-Hhn1a (84 aa).

The N-terminal stretch at 1–22 (MKVTLIAILTCAAVLVLHTTAA) is a signal peptide. A propeptide spanning residues 23-47 (EELEESQLMEVGMPDTELEAVDEER) is cleaved from the precursor. 3 cysteine pairs are disulfide-bonded: cysteine 51–cysteine 65, cysteine 55–cysteine 76, and cysteine 70–cysteine 81.

The protein belongs to the neurotoxin 12 (Hwtx-2) family. 02 (Hwtx-2) subfamily. In terms of tissue distribution, expressed by the venom gland.

It localises to the secreted. Functionally, postsynaptic neurotoxin. In Cyriopagopus hainanus (Chinese bird spider), this protein is U4-theraphotoxin-Hhn1a.